The sequence spans 340 residues: Polyporopepsin (340 aa).

Residues 14 to 330 (YVVNVGVGSP…DTTNKRLGLA (317 aa)) form the Peptidase A1 domain. Asp-32 is a catalytic residue. Asn-192 is a glycosylation site (N-linked (GlcNAc...) asparagine). Asp-212 is an active-site residue. A glycan (N-linked (GlcNAc...) asparagine) is linked at Asn-238.

This sequence belongs to the peptidase A1 family.

It carries out the reaction Milk clotting activity, broad specificity, but fails to cleave 15-Leu-|-Tyr-16 or 16-Tyr-|-Leu-17 of insulin B chain.. The polypeptide is Polyporopepsin (Irpex lacteus (Milk-white toothed polypore)).